The primary structure comprises 196 residues: Imidazoleglycerol-phosphate dehydratase (196 aa).

It belongs to the imidazoleglycerol-phosphate dehydratase family.

The protein resides in the cytoplasm. It catalyses the reaction D-erythro-1-(imidazol-4-yl)glycerol 3-phosphate = 3-(imidazol-4-yl)-2-oxopropyl phosphate + H2O. Its pathway is amino-acid biosynthesis; L-histidine biosynthesis; L-histidine from 5-phospho-alpha-D-ribose 1-diphosphate: step 6/9. The chain is Imidazoleglycerol-phosphate dehydratase from Clostridium botulinum (strain Kyoto / Type A2).